A 315-amino-acid chain; its full sequence is Ribosomal RNA small subunit methyltransferase H (315 aa).

S-adenosyl-L-methionine contacts are provided by residues 37–39 (GGH), Asp57, Phe83, Asp105, and Gln112.

Belongs to the methyltransferase superfamily. RsmH family.

The protein localises to the cytoplasm. It carries out the reaction cytidine(1402) in 16S rRNA + S-adenosyl-L-methionine = N(4)-methylcytidine(1402) in 16S rRNA + S-adenosyl-L-homocysteine + H(+). In terms of biological role, specifically methylates the N4 position of cytidine in position 1402 (C1402) of 16S rRNA. The polypeptide is Ribosomal RNA small subunit methyltransferase H (Pseudomonas putida (strain ATCC 700007 / DSM 6899 / JCM 31910 / BCRC 17059 / LMG 24140 / F1)).